A 561-amino-acid polypeptide reads, in one-letter code: Trehalose-6-phosphate hydrolase (561 aa).

Catalysis depends on aspartate 203, which acts as the Nucleophile. Glutamate 254 acts as the Proton donor in catalysis.

The protein belongs to the glycosyl hydrolase 13 family.

Its subcellular location is the cytoplasm. The catalysed reaction is alpha,alpha-trehalose 6-phosphate + H2O = D-glucose 6-phosphate + D-glucose. Activity is stimulated by high salt concentrations with different efficiencies depending on the kind of salt. In vitro, inhibited by glucose. Hydrolyzes trehalose-6-phosphate to glucose and glucose 6-phosphate. Can also very effectively hydrolyze p-nitrophenyl-alpha-D-glucopyranoside, but not lactose, maltose, sucrose or sucrose-6-phosphate. Trehalose is also hydrolyzed, but to a much smaller extent than trehalose-6-phosphate. This Bacillus subtilis (strain 168) protein is Trehalose-6-phosphate hydrolase.